Reading from the N-terminus, the 330-residue chain is Ketol-acid reductoisomerase (NADP(+)) (330 aa).

The KARI N-terminal Rossmann domain maps to 2-182; it reads VKIFYDKDVT…GLTKVGVIQT (181 aa). NADP(+) contacts are provided by residues 25 to 28, Arg-48, Ser-53, and 83 to 86; these read YGSQ and DEVQ. His-108 is an active-site residue. Residue Gly-134 participates in NADP(+) binding. One can recognise a KARI C-terminal knotted domain in the interval 183–328; the sequence is TFREETETDL…KELRKMCGLE (146 aa). 4 residues coordinate Mg(2+): Asp-191, Glu-195, Glu-227, and Glu-231. Residue Ser-252 coordinates substrate.

It belongs to the ketol-acid reductoisomerase family. Mg(2+) serves as cofactor.

The enzyme catalyses (2R)-2,3-dihydroxy-3-methylbutanoate + NADP(+) = (2S)-2-acetolactate + NADPH + H(+). It catalyses the reaction (2R,3R)-2,3-dihydroxy-3-methylpentanoate + NADP(+) = (S)-2-ethyl-2-hydroxy-3-oxobutanoate + NADPH + H(+). The protein operates within amino-acid biosynthesis; L-isoleucine biosynthesis; L-isoleucine from 2-oxobutanoate: step 2/4. It participates in amino-acid biosynthesis; L-valine biosynthesis; L-valine from pyruvate: step 2/4. Functionally, involved in the biosynthesis of branched-chain amino acids (BCAA). Catalyzes an alkyl-migration followed by a ketol-acid reduction of (S)-2-acetolactate (S2AL) to yield (R)-2,3-dihydroxy-isovalerate. In the isomerase reaction, S2AL is rearranged via a Mg-dependent methyl migration to produce 3-hydroxy-3-methyl-2-ketobutyrate (HMKB). In the reductase reaction, this 2-ketoacid undergoes a metal-dependent reduction by NADPH to yield (R)-2,3-dihydroxy-isovalerate. This is Ketol-acid reductoisomerase (NADP(+)) from Methanocaldococcus jannaschii (strain ATCC 43067 / DSM 2661 / JAL-1 / JCM 10045 / NBRC 100440) (Methanococcus jannaschii).